Reading from the N-terminus, the 51-residue chain is Sperm protamine P1 (51 aa).

The protein belongs to the protamine P1 family. As to expression, testis.

The protein localises to the nucleus. It is found in the chromosome. Its function is as follows. Protamines substitute for histones in the chromatin of sperm during the haploid phase of spermatogenesis. They compact sperm DNA into a highly condensed, stable and inactive complex. The protein is Sperm protamine P1 (PRM1) of Trachypithecus cristatus (Silvered leaf-monkey).